A 189-amino-acid chain; its full sequence is UPF0301 protein A1C_00165 (189 aa).

Belongs to the UPF0301 (AlgH) family.

The protein is UPF0301 protein A1C_00165 of Rickettsia akari (strain Hartford).